Here is a 120-residue protein sequence, read N- to C-terminus: NAD(P)H-quinone oxidoreductase subunit 3, chloroplastic (120 aa).

3 consecutive transmembrane segments (helical) span residues 11 to 31 (VVFF…SKLI), 65 to 85 (FALI…WAIV), and 89 to 109 (LGIT…IGLV).

Belongs to the complex I subunit 3 family. In terms of assembly, NDH is composed of at least 16 different subunits, 5 of which are encoded in the nucleus.

The protein resides in the plastid. It is found in the chloroplast thylakoid membrane. The catalysed reaction is a plastoquinone + NADH + (n+1) H(+)(in) = a plastoquinol + NAD(+) + n H(+)(out). It catalyses the reaction a plastoquinone + NADPH + (n+1) H(+)(in) = a plastoquinol + NADP(+) + n H(+)(out). NDH shuttles electrons from NAD(P)H:plastoquinone, via FMN and iron-sulfur (Fe-S) centers, to quinones in the photosynthetic chain and possibly in a chloroplast respiratory chain. The immediate electron acceptor for the enzyme in this species is believed to be plastoquinone. Couples the redox reaction to proton translocation, and thus conserves the redox energy in a proton gradient. This chain is NAD(P)H-quinone oxidoreductase subunit 3, chloroplastic, found in Mesostigma viride (Green alga).